The following is a 221-amino-acid chain: Small ribosomal subunit protein uS5 (221 aa).

Residues 46–109 (LKDEVIDIKR…INAKLNIMEI (64 aa)) enclose the S5 DRBM domain.

The protein belongs to the universal ribosomal protein uS5 family. Part of the 30S ribosomal subunit. Contacts protein S4.

In terms of biological role, with S4 and S12 plays an important role in translational accuracy. This chain is Small ribosomal subunit protein uS5, found in Thermoplasma acidophilum (strain ATCC 25905 / DSM 1728 / JCM 9062 / NBRC 15155 / AMRC-C165).